The sequence spans 448 residues: Tubulin beta-2 chain (448 aa).

8 residues coordinate GTP: Gln11, Glu69, Ser138, Gly142, Thr143, Gly144, Asn204, and Asn226. Glu69 serves as a coordination point for Mg(2+). Residues 429-448 (TADEDGYEYEDEEEVGEEDA) are disordered.

This sequence belongs to the tubulin family. Dimer of alpha and beta chains. A typical microtubule is a hollow water-filled tube with an outer diameter of 25 nm and an inner diameter of 15 nM. Alpha-beta heterodimers associate head-to-tail to form protofilaments running lengthwise along the microtubule wall with the beta-tubulin subunit facing the microtubule plus end conferring a structural polarity. Microtubules usually have 13 protofilaments but different protofilament numbers can be found in some organisms and specialized cells. Mg(2+) serves as cofactor.

The protein localises to the cytoplasm. It localises to the cytoskeleton. In terms of biological role, tubulin is the major constituent of microtubules, a cylinder consisting of laterally associated linear protofilaments composed of alpha- and beta-tubulin heterodimers. Microtubules grow by the addition of GTP-tubulin dimers to the microtubule end, where a stabilizing cap forms. Below the cap, tubulin dimers are in GDP-bound state, owing to GTPase activity of alpha-tubulin. This Lupinus albus (White lupine) protein is Tubulin beta-2 chain (TUBB2).